A 772-amino-acid chain; its full sequence is Metabotropic glutamate receptor-like protein G (772 aa).

A signal peptide spans 1–23; it reads MKKIIFLVLFLIFIFKDIKSSYG. The Extracellular segment spans residues 24–391; sequence VDLVNFKMIT…TQVKFSPSIQ (368 aa). N-linked (GlcNAc...) asparagine glycosylation is found at Asn73, Asn126, Asn262, Asn313, Asn343, and Asn378. Residues 392–412 form a helical membrane-spanning segment; that stretch reads IGVSIVSGVLIAIVLLSMVGV. Residues 413 to 426 are Cytoplasmic-facing; the sequence is YKYRASSSIRSASP. Residues 427–447 form a helical membrane-spanning segment; it reads IFLIFILFGALIVFGGIILWV. Topologically, residues 448–463 are extracellular; it reads SELNDHVCNGRLWMVT. The helical transmembrane segment at 464–484 threads the bilayer; sequence LGFSTLIGSLVVKNFRIWLIF. Residues 485–500 are Cytoplasmic-facing; that stretch reads DNPELKTVKITNYQLY. A helical membrane pass occupies residues 501–521; the sequence is PWVACCLVINIILMSILTSLG. The Extracellular portion of the chain corresponds to 522-551; the sequence is DLREVDATGIDSLGKYEFLKICKMNNSGAS. Asn546 carries N-linked (GlcNAc...) asparagine glycosylation. The chain crosses the membrane as a helical span at residues 552–572; it reads VLYTILAYFGALLLTGVFVSW. Topologically, residues 573-586 are cytoplasmic; the sequence is KIRIVDIEEFNESR. Residues 587-607 form a helical membrane-spanning segment; it reads AIAHTLYAISFCLFVIVPLMI. The Extracellular portion of the chain corresponds to 608–616; sequence SPLEKQSET. Residues 617 to 637 traverse the membrane as a helical segment; it reads IILSVAGLFITTAAVLIIFLP. At 638-772 the chain is on the cytoplasmic side; it reads KFYRVYEYGE…QIEPDEKNQD (135 aa). The disordered stretch occupies residues 664-772; that stretch reads TARAESHKSS…QIEPDEKNQD (109 aa). The segment covering 718-728 has biased composition (acidic residues); it reads FTEESVSEIDE. Residues 740–753 are compositionally biased toward low complexity; sequence PEINQSEQQNSEIE. A compositionally biased stretch (pro residues) spans 754–763; sequence QPPPPPPPQQ.

This sequence in the N-terminal section; belongs to the BMP lipoprotein family. In the C-terminal section; belongs to the G-protein coupled receptor 3 family. GABA-B receptor subfamily.

The protein localises to the membrane. The protein is Metabotropic glutamate receptor-like protein G (grlG) of Dictyostelium discoideum (Social amoeba).